A 244-amino-acid polypeptide reads, in one-letter code: Lymphotoxin-beta (244 aa).

Topologically, residues 1-18 (MGALGLEGRGGRLQGRGS) are cytoplasmic. A helical; Signal-anchor for type II membrane protein membrane pass occupies residues 19 to 48 (LLLAVAGATSLVTLLLAVPITVLAVLALVP). Residues 49–244 (QDQGGLVTET…KTFFGAVMVG (196 aa)) are Extracellular-facing. Residues 88 to 243 (PAAHLIGAPL…GKTFFGAVMV (156 aa)) enclose the THD domain. N-linked (GlcNAc...) asparagine glycosylation occurs at N222.

This sequence belongs to the tumor necrosis factor family. As to quaternary structure, heterotrimer of either two LTB and one LTA subunits or (less prevalent) one LTB and two LTA subunits. In terms of tissue distribution, spleen and thymus.

The protein localises to the membrane. Functionally, cytokine that binds to LTBR/TNFRSF3. May play a specific role in immune response regulation. Provides the membrane anchor for the attachment of the heterotrimeric complex to the cell surface. Isoform 2 is probably non-functional. The sequence is that of Lymphotoxin-beta (LTB) from Homo sapiens (Human).